An 84-amino-acid polypeptide reads, in one-letter code: Large ribosomal subunit protein bL31B-2 (84 aa).

It belongs to the bacterial ribosomal protein bL31 family. Type B subfamily. Part of the 50S ribosomal subunit.

This is Large ribosomal subunit protein bL31B-2 from Streptomyces coelicolor (strain ATCC BAA-471 / A3(2) / M145).